The sequence spans 757 residues: Serine/threonine-protein phosphatase 2A 56 kDa regulatory subunit delta isoform (757 aa).

Residues 1–11 (MMRGFKQRLIK) show a composition bias toward basic residues. Disordered stretches follow at residues 1 to 172 (MMRG…EDHA) and 188 to 250 (ISNA…NPDT). The segment covering 12-21 (KTTGSSSSSS) has biased composition (low complexity). The segment covering 23-34 (KKKDKEKEKEKS) has biased composition (basic and acidic residues). Composition is skewed to low complexity over residues 35–66 (STTS…GSKS), 86–119 (SSTS…STKK), and 128–147 (QSKQ…SSSS). Positions 160–172 (TKDDKSTSGEDHA) are enriched in basic and acidic residues. A compositionally biased stretch (low complexity) spans 197–216 (SSDVENGNSNNNNMNINTSN). A compositionally biased stretch (polar residues) spans 217-228 (TQDANHASSQSI). Residues threonine 242 and threonine 257 each carry the phosphothreonine modification. Residues 734–757 (SFNTASENNTLNEENENDCDSEIQ) are disordered. The segment covering 746 to 757 (EENENDCDSEIQ) has biased composition (acidic residues).

Belongs to the phosphatase 2A regulatory subunit B family. PP2A consists of a common heterodimeric core enzyme, composed of a 36 kDa catalytic subunit (subunit C) and a 65 kDa constant regulatory subunit (PR65 or subunit A), that associates with a variety of regulatory subunits. Proteins that associate with the core dimer include three families of regulatory subunits B (the R2/B/PR55/B55, R3/B''/PR72/PR130/PR59 and R5/B'/B56 families), the 48 kDa variable regulatory subunit, viral proteins, and cell signaling molecules.

The protein resides in the cytoplasm. The protein localises to the nucleus. Its function is as follows. The B regulatory subunit might modulate substrate selectivity and catalytic activity, and might also direct the localization of the catalytic enzyme to a particular subcellular compartment. In terms of biological role, multicopy suppressor of ROX3 and HSP60. The protein is Serine/threonine-protein phosphatase 2A 56 kDa regulatory subunit delta isoform (RTS1) of Saccharomyces cerevisiae (strain ATCC 204508 / S288c) (Baker's yeast).